Here is a 296-residue protein sequence, read N- to C-terminus: 4-hydroxy-tetrahydrodipicolinate synthase (296 aa).

Thr44 is a binding site for pyruvate. The active-site Proton donor/acceptor is the Tyr132. Residue Lys162 is the Schiff-base intermediate with substrate of the active site. Ile204 contributes to the pyruvate binding site.

It belongs to the DapA family. In terms of assembly, homotetramer; dimer of dimers.

The protein localises to the cytoplasm. The enzyme catalyses L-aspartate 4-semialdehyde + pyruvate = (2S,4S)-4-hydroxy-2,3,4,5-tetrahydrodipicolinate + H2O + H(+). It participates in amino-acid biosynthesis; L-lysine biosynthesis via DAP pathway; (S)-tetrahydrodipicolinate from L-aspartate: step 3/4. Its function is as follows. Catalyzes the condensation of (S)-aspartate-beta-semialdehyde [(S)-ASA] and pyruvate to 4-hydroxy-tetrahydrodipicolinate (HTPA). The sequence is that of 4-hydroxy-tetrahydrodipicolinate synthase from Novosphingobium aromaticivorans (strain ATCC 700278 / DSM 12444 / CCUG 56034 / CIP 105152 / NBRC 16084 / F199).